The primary structure comprises 448 residues: Homogentisate 1,2-dioxygenase (448 aa).

The Proton acceptor role is filled by histidine 303. The Fe cation site is built by histidine 346 and glutamate 352. Residues tyrosine 361 and histidine 382 each coordinate homogentisate. Histidine 382 lines the Fe cation pocket.

It belongs to the homogentisate dioxygenase family. As to quaternary structure, hexamer; dimer of trimers. Fe cation serves as cofactor.

It catalyses the reaction homogentisate + O2 = 4-maleylacetoacetate + H(+). It participates in amino-acid degradation; L-phenylalanine degradation; acetoacetate and fumarate from L-phenylalanine: step 4/6. Functionally, involved in the catabolism of homogentisate (2,5-dihydroxyphenylacetate or 2,5-OH-PhAc), a central intermediate in the degradation of phenylalanine and tyrosine. Catalyzes the oxidative ring cleavage of the aromatic ring of homogentisate to yield maleylacetoacetate. This chain is Homogentisate 1,2-dioxygenase, found in Nitrobacter hamburgensis (strain DSM 10229 / NCIMB 13809 / X14).